Reading from the N-terminus, the 1960-residue chain is Myosin-9 (1960 aa).

N-acetylalanine is present on A2. Residues 2 to 838 (AQQAADKYLY…RLFTKVKPLL (837 aa)) form a mediates interaction with LIMCH1 region. K8 carries the post-translational modification N6-acetyllysine. Residue Y11 is modified to Phosphotyrosine. One can recognise a Myosin N-terminal SH3-like domain in the interval 27-77 (AAKKLVWVPSSKNGFEPASLKEEVGEEAIVELVENGKKVKVNKDDIQKMNP). The region spanning 81–776 (SKVEDMAELT…VLAHLEEERD (696 aa)) is the Myosin motor domain. The residue at position 102 (K102) is an N6-acetyllysine. An ATP-binding site is contributed by 174 to 181 (GESGAGKT). An N6-acetyllysine mark is found at K299, K435, and K613. Position 628 is a phosphoserine (S628). An actin-binding region spans residues 654-676 (LAKLMATLRNTNPNFVRCIIPNH). Y754 is modified (phosphotyrosine). One can recognise an IQ domain in the interval 779 to 808 (ITDVIIGFQACCRGYLARKAFAKRQQQLTA). Positions 841-1926 (IRHEDELLAK…LKNKLRRGDL (1086 aa)) form a coiled coil. K850 is subject to N6-succinyllysine. 3 positions are modified to N6-acetyllysine: K860, K975, and K1024. A compositionally biased stretch (basic and acidic residues) spans 1035–1055 (RLRREEKQRQELEKTRRKLEG). The disordered stretch occupies residues 1035–1057 (RLRREEKQRQELEKTRRKLEGDS). S1114 carries the phosphoserine modification. The interval 1117–1167 (QEDLESERASRNKAEKQKRDLGEELEALKTELEDTLDSTAAQQELRSKREQ) is disordered. The span at 1122–1148 (SERASRNKAEKQKRDLGEELEALKTEL) shows a compositional bias: basic and acidic residues. An N6-acetyllysine mark is found at K1234 and K1249. Residues 1327-1352 (LSTKLKQMEDEKNSFREQLEEEEEAK) are disordered. The span at 1332–1352 (KQMEDEKNSFREQLEEEEEAK) shows a compositional bias: basic and acidic residues. An N6-acetyllysine mark is found at K1357, K1392, K1404, K1410, K1459, and K1638. K1669 bears the N6-succinyllysine mark. Position 1714 is a phosphoserine (S1714). Residues 1768–1788 (LERSHAQKNENARQQLERQNK) form a disordered region. 3 positions are modified to N6-acetyllysine: K1793, K1802, and K1845. The interval 1877–1908 (RQLEEAEEEAQRANASRRKLQRELEDATETAD) is disordered. Position 1923 is an omega-N-methylarginine (R1923). Position 1939 is a phosphothreonine (T1939). The tract at residues 1939 to 1960 (TGDCSDEEVDGKADGADAKAAE) is disordered. At S1943 the chain carries Phosphoserine. Residues 1948-1960 (DGKADGADAKAAE) show a composition bias toward basic and acidic residues.

It belongs to the TRAFAC class myosin-kinesin ATPase superfamily. Myosin family. In terms of assembly, myosin is a hexameric protein that consists of 2 heavy chain subunits (MHC), 2 alkali light chain subunits (MLC) and 2 regulatory light chain subunits (MLC-2). Interacts with RASIP1. Interacts with DDR1. Interacts with PDLIM2. Interacts with SVIL. Interacts with HTRA3. Interacts with Myo7a. Interacts with CFAP95. Interacts with LIMCH1; independently of the integration of MYH9 into the myosin complex. Interacts with RAB3A. Interacts with ZBED4. Interacts with S100A4; this interaction increases cell motility. ISGylated. In terms of processing, ubiquitination.

It is found in the cytoplasm. It localises to the cytoskeleton. The protein resides in the cell cortex. Its subcellular location is the cytoplasmic vesicle. The protein localises to the secretory vesicle. It is found in the cortical granule. Its function is as follows. Cellular myosin that appears to play a role in cytokinesis, cell shape, and specialized functions such as secretion and capping. Required for cortical actin clearance prior to oocyte exocytosis. Promotes cell motility in conjunction with S100A4. During cell spreading, plays an important role in cytoskeleton reorganization, focal contact formation (in the margins but not the central part of spreading cells), and lamellipodial retraction; this function is mechanically antagonized by MYH10. The sequence is that of Myosin-9 (Myh9) from Mus musculus (Mouse).